A 239-amino-acid chain; its full sequence is MRQPDSSLPRTGQDHTLSPYEPELGEVPSNDLSMADLDNVNKTGTTTIGISTAEGVVIATDMRASLGGRFVSNKNVQKVEQIHPSAALTLVGSVGGAQSFIRSLRAEVDLYEARRGEDISINALATLAGNFARGGPFFAINPILGGVDDEGHHVYSIDPAGGVMKDDYTVTGSGLTVAYGTLEREYEDDMTNEEAKRVAASGIKAAVERDTGSGNGVFLATVTDEDVEIKGHKDFDEVL.

Polar residues predominate over residues 1 to 16; that stretch reads MRQPDSSLPRTGQDHT. The disordered stretch occupies residues 1 to 32; the sequence is MRQPDSSLPRTGQDHTLSPYEPELGEVPSNDL. A propeptide spans 1–44 (removed in mature form; by autocatalysis); that stretch reads MRQPDSSLPRTGQDHTLSPYEPELGEVPSNDLSMADLDNVNKTG. Threonine 45 serves as the catalytic Nucleophile.

It belongs to the peptidase T1B family. The 20S proteasome core is composed of 14 alpha and 14 beta subunits that assemble into four stacked heptameric rings, resulting in a barrel-shaped structure. The two inner rings, each composed of seven catalytic beta subunits, are sandwiched by two outer rings, each composed of seven alpha subunits. The catalytic chamber with the active sites is on the inside of the barrel. Has a gated structure, the ends of the cylinder being occluded by the N-termini of the alpha-subunits. Is capped at one or both ends by the proteasome regulatory ATPase, PAN.

It localises to the cytoplasm. The enzyme catalyses Cleavage of peptide bonds with very broad specificity.. The formation of the proteasomal ATPase PAN-20S proteasome complex, via the docking of the C-termini of PAN into the intersubunit pockets in the alpha-rings, triggers opening of the gate for substrate entry. Interconversion between the open-gate and close-gate conformations leads to a dynamic regulation of the 20S proteasome proteolysis activity. In terms of biological role, component of the proteasome core, a large protease complex with broad specificity involved in protein degradation. This is Proteasome subunit beta from Natronomonas pharaonis (strain ATCC 35678 / DSM 2160 / CIP 103997 / JCM 8858 / NBRC 14720 / NCIMB 2260 / Gabara) (Halobacterium pharaonis).